A 185-amino-acid polypeptide reads, in one-letter code: Peptidyl-tRNA hydrolase (185 aa).

Position 14 (Tyr14) interacts with tRNA. His19 acts as the Proton acceptor in catalysis. Phe64, Asn66, and Asn112 together coordinate tRNA.

It belongs to the PTH family. In terms of assembly, monomer.

It is found in the cytoplasm. The enzyme catalyses an N-acyl-L-alpha-aminoacyl-tRNA + H2O = an N-acyl-L-amino acid + a tRNA + H(+). In terms of biological role, hydrolyzes ribosome-free peptidyl-tRNAs (with 1 or more amino acids incorporated), which drop off the ribosome during protein synthesis, or as a result of ribosome stalling. Functionally, catalyzes the release of premature peptidyl moieties from peptidyl-tRNA molecules trapped in stalled 50S ribosomal subunits, and thus maintains levels of free tRNAs and 50S ribosomes. The chain is Peptidyl-tRNA hydrolase from Alkaliphilus metalliredigens (strain QYMF).